Reading from the N-terminus, the 89-residue chain is Small ribosomal subunit protein uS15 (89 aa).

This sequence belongs to the universal ribosomal protein uS15 family. As to quaternary structure, part of the 30S ribosomal subunit. Forms a bridge to the 50S subunit in the 70S ribosome, contacting the 23S rRNA.

In terms of biological role, one of the primary rRNA binding proteins, it binds directly to 16S rRNA where it helps nucleate assembly of the platform of the 30S subunit by binding and bridging several RNA helices of the 16S rRNA. Functionally, forms an intersubunit bridge (bridge B4) with the 23S rRNA of the 50S subunit in the ribosome. This chain is Small ribosomal subunit protein uS15, found in Chlorobium limicola (strain DSM 245 / NBRC 103803 / 6330).